The primary structure comprises 283 residues: MSETTQAAAIQAAAVAENERAPLKIALGIEYDGSQYYGWQRQIDVASVQACLEKALSKVADEPIEVLCAGRTDAGVHGTGQVVHFTTQAIRKDAAWTMGVNANLPPDIAVRWVKAVHEDFHARFSATARRYRYIIYNHRYRPAVLSHGMTHFYHPLDVERMERAGQCLLGENDFTSFRAVQCQSRTPWRNVNHLKVTRHGNYIVVDIKANAFVHHMVRNIVGSLMDVGCGNRPESWIAELLAAKDRTLAGATARAEGLYLVAVDYPARFALPQPTMGPLFLAD.

The Nucleophile role is filled by Asp73. Residues 120 to 124 (FHARF) are RNA binding. Tyr131 contributes to the substrate binding site. The interaction with tRNA stretch occupies residues 181 to 185 (QCQSR).

Belongs to the tRNA pseudouridine synthase TruA family. In terms of assembly, homodimer.

It catalyses the reaction uridine(38/39/40) in tRNA = pseudouridine(38/39/40) in tRNA. Functionally, formation of pseudouridine at positions 38, 39 and 40 in the anticodon stem and loop of transfer RNAs. This chain is tRNA pseudouridine synthase A, found in Pectobacterium atrosepticum (strain SCRI 1043 / ATCC BAA-672) (Erwinia carotovora subsp. atroseptica).